The sequence spans 430 residues: KIN17-like protein (430 aa).

The C2H2-type zinc finger occupies 28–50 (CQMCQKQCRDENGFKCHCMSESH). A winged helix-turn-helix (wHTH) region spans residues 51–160 (QRQMQVFGQA…KARLKRKRIK (110 aa)). Residues 147-183 (EQAVKARLKRKRIKSDLAEDERQERMIARQIERAQQS) adopt a coiled-coil conformation. A Nuclear localization signal (NLS) motif is present at residues 155–158 (KRKR). Disordered stretches follow at residues 179–230 (RAQQ…ANKA) and 261–284 (EEED…GKDA). A compositionally biased stretch (acidic residues) spans 191–224 (LGDDASPDGSEGESGSEDEYSDSENDHEGQEEDA). The segment covering 261–278 (EEEDEVSARDKEKEELAK) has biased composition (basic and acidic residues). A coiled-coil region spans residues 283–312 (DAINAAEARRSALDELMKEEEKAKERSNRK). The segment at 319 to 370 (GIVVKVMSKSLAEKGYCKQKGVVKRVIDKYVGEIEMLESKHVLRVDQDELET) is C-terminal subdomain A. A C-terminal subdomain B region spans residues 376-427 (GGLVRIVNGAYRGSNARLLSVDTERFCAKVQVEKGLYDGKVLKAIEYEDICK).

This sequence belongs to the KIN17 family.

It localises to the nucleus. This Oryza sativa subsp. japonica (Rice) protein is KIN17-like protein.